The chain runs to 363 residues: S-adenosylmethionine:tRNA ribosyltransferase-isomerase (363 aa).

It belongs to the QueA family. As to quaternary structure, monomer.

Its subcellular location is the cytoplasm. The enzyme catalyses 7-aminomethyl-7-carbaguanosine(34) in tRNA + S-adenosyl-L-methionine = epoxyqueuosine(34) in tRNA + adenine + L-methionine + 2 H(+). It functions in the pathway tRNA modification; tRNA-queuosine biosynthesis. Transfers and isomerizes the ribose moiety from AdoMet to the 7-aminomethyl group of 7-deazaguanine (preQ1-tRNA) to give epoxyqueuosine (oQ-tRNA). The sequence is that of S-adenosylmethionine:tRNA ribosyltransferase-isomerase from Brucella melitensis biotype 2 (strain ATCC 23457).